A 993-amino-acid polypeptide reads, in one-letter code: Testis-expressed protein 13C (993 aa).

Disordered regions lie at residues 281-381 (QEET…SLKK), 520-547 (DSKS…SHSL), and 894-959 (FSKS…PVNW). Residues 325–335 (GMTSQGDSSSH) are compositionally biased toward polar residues. Residues 353–364 (SRSHSLEKKPVM) show a composition bias toward basic and acidic residues. Residues 944-957 (ESQQQKPASCSSPV) are compositionally biased toward polar residues. A RanBP2-type zinc finger spans residues 955 to 984 (SPVNWACPWCNAMNFPRNKVCSKCKRVRMP).

Belongs to the TEX13 family.

This Homo sapiens (Human) protein is Testis-expressed protein 13C.